The sequence spans 371 residues: 3-isopropylmalate dehydrogenase B (371 aa).

79-93 (GSKVDHIRRGLDGPE) contributes to the NAD(+) binding site. R100, R110, R142, and D229 together coordinate substrate. Residues D229, D254, and D258 each contribute to the Mg(2+) site. 296–308 (GSAPTIAGKNIAN) contacts NAD(+).

Belongs to the isocitrate and isopropylmalate dehydrogenases family. In terms of assembly, homodimer. It depends on Mg(2+) as a cofactor. Mn(2+) is required as a cofactor.

It is found in the cytoplasm. It catalyses the reaction (2R,3S)-3-isopropylmalate + NAD(+) = 4-methyl-2-oxopentanoate + CO2 + NADH. The protein operates within amino-acid biosynthesis; L-leucine biosynthesis; L-leucine from 3-methyl-2-oxobutanoate: step 3/4. Its function is as follows. Catalyzes the oxidation of 3-carboxy-2-hydroxy-4-methylpentanoate (3-isopropylmalate) to 3-carboxy-4-methyl-2-oxopentanoate. The product decarboxylates to 4-methyl-2 oxopentanoate. The chain is 3-isopropylmalate dehydrogenase B (leu2B) from Aspergillus niger.